We begin with the raw amino-acid sequence, 180 residues long: Large ribosomal subunit protein uL16 (180 aa).

Belongs to the universal ribosomal protein uL16 family.

This chain is Large ribosomal subunit protein uL16, found in Thermococcus sibiricus (strain DSM 12597 / MM 739).